A 197-amino-acid polypeptide reads, in one-letter code: LexA repressor (197 aa).

Residues 28–47 constitute a DNA-binding region (H-T-H motif); it reads VREIARRFRITPRGAQLHLV. Catalysis depends on for autocatalytic cleavage activity residues Ser-119 and Lys-156.

The protein belongs to the peptidase S24 family. In terms of assembly, homodimer.

It carries out the reaction Hydrolysis of Ala-|-Gly bond in repressor LexA.. Represses a number of genes involved in the response to DNA damage (SOS response), including recA and lexA. In the presence of single-stranded DNA, RecA interacts with LexA causing an autocatalytic cleavage which disrupts the DNA-binding part of LexA, leading to derepression of the SOS regulon and eventually DNA repair. This Thermotoga neapolitana protein is LexA repressor.